The sequence spans 222 residues: Sugar fermentation stimulation protein homolog (222 aa).

It belongs to the SfsA family.

The chain is Sugar fermentation stimulation protein homolog from Thermotoga sp. (strain RQ2).